Consider the following 943-residue polypeptide: Isoleucine--tRNA ligase (943 aa).

A 'HIGH' region motif is present at residues 59–69 (PYANGRIHLGH). Residue Glu-577 coordinates L-isoleucyl-5'-AMP. The short motif at 618–622 (KMSKS) is the 'KMSKS' region element. Lys-621 provides a ligand contact to ATP. Zn(2+) contacts are provided by Cys-906, Cys-909, Cys-926, and Cys-929.

This sequence belongs to the class-I aminoacyl-tRNA synthetase family. IleS type 1 subfamily. As to quaternary structure, monomer. Requires Zn(2+) as cofactor.

The protein localises to the cytoplasm. It carries out the reaction tRNA(Ile) + L-isoleucine + ATP = L-isoleucyl-tRNA(Ile) + AMP + diphosphate. Its function is as follows. Catalyzes the attachment of isoleucine to tRNA(Ile). As IleRS can inadvertently accommodate and process structurally similar amino acids such as valine, to avoid such errors it has two additional distinct tRNA(Ile)-dependent editing activities. One activity is designated as 'pretransfer' editing and involves the hydrolysis of activated Val-AMP. The other activity is designated 'posttransfer' editing and involves deacylation of mischarged Val-tRNA(Ile). This Stenotrophomonas maltophilia (strain K279a) protein is Isoleucine--tRNA ligase.